Here is a 132-residue protein sequence, read N- to C-terminus: MSMTDPIADLLVRIKNAAAVGKQTVKAPSSKIKVAIAQVLKDEGYITDLRVTQLENNKSELEIVLKYFEGKPVIATLKRFSRSGLRQYRGKSELPKVMNGLGISIISTSKGIMTDAQARQLGVGGEVLCFVA.

It belongs to the universal ribosomal protein uS8 family. In terms of assembly, part of the 30S ribosomal subunit. Contacts proteins S5 and S12.

In terms of biological role, one of the primary rRNA binding proteins, it binds directly to 16S rRNA central domain where it helps coordinate assembly of the platform of the 30S subunit. This is Small ribosomal subunit protein uS8 from Stenotrophomonas maltophilia (strain K279a).